The primary structure comprises 552 residues: Polypyrimidine tract-binding protein 3 (552 aa).

The residue at position 1 (M1) is an N-acetylmethionine. S17 carries the post-translational modification Phosphoserine. Residues 32 to 43 (MNSSTPSTANGN) show a composition bias toward polar residues. A disordered region spans residues 32–55 (MNSSTPSTANGNDSKKFKRDRPPC). RRM domains lie at 59–143 (RVLH…NLPN), 182–258 (LRII…FSKL), and 358–432 (SVLL…LSKH). Residue K65 forms a Glycyl lysine isopeptide (Lys-Gly) (interchain with G-Cter in SUMO2) linkage. The residue at position 127 (Y127) is a Phosphotyrosine. T138 is modified (phosphothreonine). K216 participates in a covalent cross-link: Glycyl lysine isopeptide (Lys-Gly) (interchain with G-Cter in SUMO2). K423 bears the N6-acetyllysine mark. A disordered region spans residues 435 to 455 (VQLPREGQEDQGLTKDFSNSP). S454 is subject to Phosphoserine. The 76-residue stretch at 475 to 550 (ATLHLSNIPP…HHLRVSFSKS (76 aa)) folds into the RRM 4 domain.

In terms of assembly, interacts with THBS4 (via the acidic amphipathic C-terminus). As to expression, expressed in several hematopoietic cell lines examined.

Functionally, RNA-binding protein that mediates pre-mRNA alternative splicing regulation. Plays a role in the regulation of cell proliferation, differentiation and migration. Positive regulator of EPO-dependent erythropoiesis. Participates in cell differentiation regulation by repressing tissue-specific exons. Promotes FAS exon 6 skipping. Binds RNA, preferentially to both poly(G) and poly(U). The chain is Polypyrimidine tract-binding protein 3 (PTBP3) from Homo sapiens (Human).